A 333-amino-acid chain; its full sequence is GTPase Obg (333 aa).

Residues 1-159 (MKFIDQTIIQ…RDIQLELILI (159 aa)) enclose the Obg domain. An OBG-type G domain is found at 160 to 332 (ADVGTLGMPN…LCSDIAFYLQ (173 aa)). Residues 166–173 (GMPNAGKS), 191–195 (FTTLN), 212–215 (DIPG), 282–285 (NKID), and 313–315 (SSI) each bind GTP. 2 residues coordinate Mg(2+): serine 173 and threonine 193.

Belongs to the TRAFAC class OBG-HflX-like GTPase superfamily. OBG GTPase family. Monomer. Mg(2+) is required as a cofactor.

It localises to the cytoplasm. Its function is as follows. An essential GTPase which binds GTP, GDP and possibly (p)ppGpp with moderate affinity, with high nucleotide exchange rates and a fairly low GTP hydrolysis rate. Plays a role in control of the cell cycle, stress response, ribosome biogenesis and in those bacteria that undergo differentiation, in morphogenesis control. The sequence is that of GTPase Obg from Buchnera aphidicola subsp. Schizaphis graminum (strain Sg).